The chain runs to 445 residues: MREIVHLQTGQCGNQIGAAFWQTISGEHGVDGAGYYNGSLDIQLERMNVYFNEAAEKKYVPRAVLVDLEPGTMDSVRAGPFGQLFRPDNFVFVQSGAGNTWAKGHYTEGSELVDQVIDVVRREAERCDCLQGFQIIHSLGGGTGAGMGTLLISKIREEFPDRMMATFSSVVPSPKVSDTVVEPYNATLSNHQLVENSDETFCIDNEALYDICMRTLKLSEPSYGDLNHLVSAVMSGVTTCLRFPGQLNSDLRKLAVNMVPFPRLHFFMVGFAPLTSRGAYSFRVVTVPELTQKMYDPKNMMCLLDFRNGRYLTASAIFRGKVSMKEVEDQMRNVQNKNHTYFVEWIPNNVQTALCSIPPRGLKMSSTFVENSTAIQELFKRVGDQFTAMFRRKAFLHWYTGEGMDEMEFTEAESNMNDLVSEYQQYQDASISEGEDEYFDYAWAM.

Positions 11, 69, 138, 142, 143, 144, 205, and 227 each coordinate GTP. Position 69 (E69) interacts with Mg(2+).

Belongs to the tubulin family. Dimer of alpha and beta chains. A typical microtubule is a hollow water-filled tube with an outer diameter of 25 nm and an inner diameter of 15 nM. Alpha-beta heterodimers associate head-to-tail to form protofilaments running lengthwise along the microtubule wall with the beta-tubulin subunit facing the microtubule plus end conferring a structural polarity. Microtubules usually have 13 protofilaments but different protofilament numbers can be found in some organisms and specialized cells. Mg(2+) serves as cofactor.

It localises to the cytoplasm. Its subcellular location is the cytoskeleton. In terms of biological role, tubulin is the major constituent of microtubules, a cylinder consisting of laterally associated linear protofilaments composed of alpha- and beta-tubulin heterodimers. Microtubules grow by the addition of GTP-tubulin dimers to the microtubule end, where a stabilizing cap forms. Below the cap, tubulin dimers are in GDP-bound state, owing to GTPase activity of alpha-tubulin. The polypeptide is Tubulin beta chain (TUB2) (Ajellomyces capsulatus (Darling's disease fungus)).